Consider the following 248-residue polypeptide: 2,3-bisphosphoglycerate-dependent phosphoglycerate mutase (248 aa).

Substrate-binding positions include 8-15, 21-22, Arg-60, 87-90, Lys-98, 114-115, and 183-184; these read RHGESTWN, TG, ERHY, RR, and GN. His-9 functions as the Tele-phosphohistidine intermediate in the catalytic mechanism. The active-site Proton donor/acceptor is the Glu-87.

It belongs to the phosphoglycerate mutase family. BPG-dependent PGAM subfamily. In terms of assembly, homodimer.

It carries out the reaction (2R)-2-phosphoglycerate = (2R)-3-phosphoglycerate. The protein operates within carbohydrate degradation; glycolysis; pyruvate from D-glyceraldehyde 3-phosphate: step 3/5. Its function is as follows. Catalyzes the interconversion of 2-phosphoglycerate and 3-phosphoglycerate. This chain is 2,3-bisphosphoglycerate-dependent phosphoglycerate mutase, found in Burkholderia ambifaria (strain ATCC BAA-244 / DSM 16087 / CCUG 44356 / LMG 19182 / AMMD) (Burkholderia cepacia (strain AMMD)).